The following is a 413-amino-acid chain: Cell division protein FtsZ 2 (413 aa).

GTP-binding positions include 130-132 (GTG), glutamate 169, arginine 173, and aspartate 216.

The protein belongs to the FtsZ family. Homodimer. Polymerizes to form a dynamic ring structure in a strictly GTP-dependent manner. Interacts directly with several other division proteins.

It is found in the cytoplasm. Functionally, essential cell division protein that forms a contractile ring structure (Z ring) at the future cell division site. The regulation of the ring assembly controls the timing and the location of cell division. One of the functions of the FtsZ ring is to recruit other cell division proteins to the septum to produce a new cell wall between the dividing cells. Binds GTP and shows GTPase activity. The polypeptide is Cell division protein FtsZ 2 (Pyrococcus abyssi (strain GE5 / Orsay)).